Here is a 154-residue protein sequence, read N- to C-terminus: Histone H2B.5 (154 aa).

Residues 1-25 show a composition bias toward basic and acidic residues; that stretch reads MAPKAEKKPAAKKVAEEEPSEKAAP. Residues 1–62 form a disordered region; sequence MAPKAEKKPA…DKKGRKKAKK (62 aa). N6-acetyllysine occurs at positions 7 and 39. Lys-150 participates in a covalent cross-link: Glycyl lysine isopeptide (Lys-Gly) (interchain with G-Cter in ubiquitin).

This sequence belongs to the histone H2B family. As to quaternary structure, the nucleosome is a histone octamer containing two molecules each of H2A, H2B, H3 and H4 assembled in one H3-H4 heterotetramer and two H2A-H2B heterodimers. The octamer wraps approximately 147 bp of DNA. In terms of processing, can be acetylated to form H2BK6ac and H2BK33ac. Post-translationally, monoubiquitinated to form H2BK143ub1; may give a specific tag for epigenetic transcriptional activation.

The protein localises to the nucleus. It is found in the chromosome. In terms of biological role, core component of nucleosome. Nucleosomes wrap and compact DNA into chromatin, limiting DNA accessibility to the cellular machineries which require DNA as a template. Histones thereby play a central role in transcription regulation, DNA repair, DNA replication and chromosomal stability. DNA accessibility is regulated via a complex set of post-translational modifications of histones, also called histone code, and nucleosome remodeling. This Zea mays (Maize) protein is Histone H2B.5.